A 147-amino-acid polypeptide reads, in one-letter code: Large ribosomal subunit protein bL21 (147 aa).

Residues 125 to 147 (EEVEAAPKAKKAAPKAKKEATKE) form a disordered region.

It belongs to the bacterial ribosomal protein bL21 family. As to quaternary structure, part of the 50S ribosomal subunit. Contacts protein L20.

Functionally, this protein binds to 23S rRNA in the presence of protein L20. This is Large ribosomal subunit protein bL21 from Flavobacterium johnsoniae (strain ATCC 17061 / DSM 2064 / JCM 8514 / BCRC 14874 / CCUG 350202 / NBRC 14942 / NCIMB 11054 / UW101) (Cytophaga johnsonae).